The following is a 356-amino-acid chain: S-adenosylmethionine:tRNA ribosyltransferase-isomerase (356 aa).

The protein belongs to the QueA family. As to quaternary structure, monomer.

It localises to the cytoplasm. It carries out the reaction 7-aminomethyl-7-carbaguanosine(34) in tRNA + S-adenosyl-L-methionine = epoxyqueuosine(34) in tRNA + adenine + L-methionine + 2 H(+). The protein operates within tRNA modification; tRNA-queuosine biosynthesis. Transfers and isomerizes the ribose moiety from AdoMet to the 7-aminomethyl group of 7-deazaguanine (preQ1-tRNA) to give epoxyqueuosine (oQ-tRNA). The protein is S-adenosylmethionine:tRNA ribosyltransferase-isomerase of Cronobacter sakazakii (strain ATCC BAA-894) (Enterobacter sakazakii).